The sequence spans 848 residues: Neuroligin-3 (848 aa).

The signal sequence occupies residues 1–37 (MWLQLGLPSLSLSPTPTVGRSLCLILWFLSLVLRAST). Residues 38–709 (QAPAPTVNTH…NPRDYSTELS (672 aa)) are Extracellular-facing. Asparagine 98 is a glycosylation site (N-linked (GlcNAc...) asparagine). Cysteine 106 and cysteine 141 are joined by a disulfide. Positions 169 to 195 (CRKGGSGAKKQGEDLADNDGDEDEDIR) are disordered. Residues 182-194 (DLADNDGDEDEDI) show a composition bias toward acidic residues. 2 disulfides stabilise this stretch: cysteine 340–cysteine 351 and cysteine 510–cysteine 544. The N-linked (GlcNAc...) asparagine glycan is linked to asparagine 545. Composition is skewed to polar residues over residues 645–656 (TKVPPPDTTHSS) and 677–689 (AYSN…SWNG). Positions 645–691 (TKVPPPDTTHSSHITRRPNGKTWSTKRPAISPAYSNENAPGSWNGDQ) are disordered. A helical transmembrane segment spans residues 710 to 730 (VTIAVGASLLFLNVLAFAALY). The Cytoplasmic segment spans residues 731–848 (YRKDKRRQEP…LPNSHSTTRV (118 aa)). The residue at position 745 (serine 745) is a Phosphoserine. A Phosphotyrosine modification is found at tyrosine 792.

The protein belongs to the type-B carboxylesterase/lipase family. In terms of assembly, homodimer, and heterodimer with NLGN1 and NLGN2. Interacts with neurexins NRXN1, NRXN2 and NRXN3. Interaction with neurexins is mediated by heparan sulfate glycan modification on neurexin. Interacts (via its C-terminus) with DLG4/PSD-95 (via PDZ domain 3). In terms of processing, the N-terminus is blocked. In terms of tissue distribution, detected in brain and on hippocampus neurons, especially at excitatory synapses. Detected in retina (at protein level). Expressed in brain, spinal cord and dorsal root ganglion.

Its subcellular location is the cell membrane. The protein localises to the synapse. In terms of biological role, cell surface protein involved in cell-cell-interactions via its interactions with neurexin family members. Plays a role in synapse function and synaptic signal transmission, and probably mediates its effects by recruiting and clustering other synaptic proteins. May promote the initial formation of synapses, but is not essential for this. May also play a role in glia-glia or glia-neuron interactions in the developing peripheral nervous system. This is Neuroligin-3 (Nlgn3) from Rattus norvegicus (Rat).